The sequence spans 304 residues: Protease HtpX homolog (304 aa).

2 helical membrane-spanning segments follow: residues 14-34 (VFII…IGII) and 39-59 (YLNG…IMVM). Position 144 (His-144) interacts with Zn(2+). Glu-145 is a catalytic residue. Zn(2+) is bound at residue His-148. 2 helical membrane passes run 159 to 179 (IAIA…RMIF) and 202 to 222 (AIIY…ATAI). Glu-231 contributes to the Zn(2+) binding site.

It belongs to the peptidase M48B family. Zn(2+) serves as cofactor.

It localises to the cell membrane. The polypeptide is Protease HtpX homolog (Listeria monocytogenes serotype 4a (strain HCC23)).